The sequence spans 540 residues: Glucose-6-phosphate isomerase (540 aa).

E346 functions as the Proton donor in the catalytic mechanism. Active-site residues include H377 and K505.

It belongs to the GPI family.

Its subcellular location is the cytoplasm. The catalysed reaction is alpha-D-glucose 6-phosphate = beta-D-fructose 6-phosphate. It participates in carbohydrate biosynthesis; gluconeogenesis. It functions in the pathway carbohydrate degradation; glycolysis; D-glyceraldehyde 3-phosphate and glycerone phosphate from D-glucose: step 2/4. In terms of biological role, catalyzes the reversible isomerization of glucose-6-phosphate to fructose-6-phosphate. In Francisella philomiragia subsp. philomiragia (strain ATCC 25017 / CCUG 19701 / FSC 153 / O#319-036), this protein is Glucose-6-phosphate isomerase.